The chain runs to 491 residues: Aspartyl/glutamyl-tRNA(Asn/Gln) amidotransferase subunit B (491 aa).

This sequence belongs to the GatB/GatE family. GatB subfamily. Heterotrimer of A, B and C subunits.

The catalysed reaction is L-glutamyl-tRNA(Gln) + L-glutamine + ATP + H2O = L-glutaminyl-tRNA(Gln) + L-glutamate + ADP + phosphate + H(+). The enzyme catalyses L-aspartyl-tRNA(Asn) + L-glutamine + ATP + H2O = L-asparaginyl-tRNA(Asn) + L-glutamate + ADP + phosphate + 2 H(+). In terms of biological role, allows the formation of correctly charged Asn-tRNA(Asn) or Gln-tRNA(Gln) through the transamidation of misacylated Asp-tRNA(Asn) or Glu-tRNA(Gln) in organisms which lack either or both of asparaginyl-tRNA or glutaminyl-tRNA synthetases. The reaction takes place in the presence of glutamine and ATP through an activated phospho-Asp-tRNA(Asn) or phospho-Glu-tRNA(Gln). The chain is Aspartyl/glutamyl-tRNA(Asn/Gln) amidotransferase subunit B from Burkholderia cenocepacia (strain ATCC BAA-245 / DSM 16553 / LMG 16656 / NCTC 13227 / J2315 / CF5610) (Burkholderia cepacia (strain J2315)).